A 127-amino-acid polypeptide reads, in one-letter code: Protein ApaG (127 aa).

The 125-residue stretch at 3–127 (DDPRYRVEVE…FVLSVPRTLH (125 aa)) folds into the ApaG domain.

This is Protein ApaG from Xanthomonas campestris pv. campestris (strain 8004).